We begin with the raw amino-acid sequence, 224 residues long: Octanoyltransferase (224 aa).

Residues 29 to 224 (EATPDALWIC…GQKLATYLAP (196 aa)) form the BPL/LPL catalytic domain. Substrate contacts are provided by residues 68-75 (RGGQVTFH), 157-159 (ALG), and 170-172 (GVA). C188 functions as the Acyl-thioester intermediate in the catalytic mechanism.

It belongs to the LipB family.

It is found in the cytoplasm. The enzyme catalyses octanoyl-[ACP] + L-lysyl-[protein] = N(6)-octanoyl-L-lysyl-[protein] + holo-[ACP] + H(+). Its pathway is protein modification; protein lipoylation via endogenous pathway; protein N(6)-(lipoyl)lysine from octanoyl-[acyl-carrier-protein]: step 1/2. Its function is as follows. Catalyzes the transfer of endogenously produced octanoic acid from octanoyl-acyl-carrier-protein onto the lipoyl domains of lipoate-dependent enzymes. Lipoyl-ACP can also act as a substrate although octanoyl-ACP is likely to be the physiological substrate. This Polaromonas naphthalenivorans (strain CJ2) protein is Octanoyltransferase.